We begin with the raw amino-acid sequence, 210 residues long: MADTALNANLRKTATKSIVKEIRNNGGIPGVVYGKHVGSMAISVDAKDLKNILGSVTGRNTLINMNINGSKQTVMVKSLQMDPMHQNIRHVDFQQVSENTKIRTVIPVQLVGTPKGVAMGGVIQHDLRSAEIECLPNRIPEAIQVDISGLEIGDTLSVSDLNLPPGVKILDHPHTTVVGLATIKAPEPAGQPEVPPEPAEEAKAKTIEKE.

The tract at residues 185–210 (APEPAGQPEVPPEPAEEAKAKTIEKE) is disordered. A compositionally biased stretch (basic and acidic residues) spans 200–210 (EEAKAKTIEKE).

The protein belongs to the bacterial ribosomal protein bL25 family. CTC subfamily. Part of the 50S ribosomal subunit; part of the 5S rRNA/L5/L18/L25 subcomplex. Contacts the 5S rRNA. Binds to the 5S rRNA independently of L5 and L18.

This is one of the proteins that binds to the 5S RNA in the ribosome where it forms part of the central protuberance. This is Large ribosomal subunit protein bL25 from Desulforamulus reducens (strain ATCC BAA-1160 / DSM 100696 / MI-1) (Desulfotomaculum reducens).